An 853-amino-acid chain; its full sequence is DNA mismatch repair protein MutS (853 aa).

Residue 614–621 participates in ATP binding; the sequence is GPNMGGKS.

This sequence belongs to the DNA mismatch repair MutS family.

Functionally, this protein is involved in the repair of mismatches in DNA. It is possible that it carries out the mismatch recognition step. This protein has a weak ATPase activity. In Enterobacter sp. (strain 638), this protein is DNA mismatch repair protein MutS.